We begin with the raw amino-acid sequence, 449 residues long: Protein tweety homolog 1 (449 aa).

Residues methionine 1 to alanine 43 lie on the Extracellular side of the membrane. The helical transmembrane segment at leucine 44 to valine 64 threads the bilayer. Residues tyrosine 65–cysteine 86 lie on the Cytoplasmic side of the membrane. Residues cysteine 87–phenylalanine 107 traverse the membrane as a helical segment. Topologically, residues tyrosine 108–tryptophan 212 are extracellular. A glycan (N-linked (GlcNAc...) asparagine) is linked at asparagine 128. Residues leucine 213–leucine 233 traverse the membrane as a helical segment. Over alanine 234–lysine 238 the chain is Cytoplasmic. Residues tryptophan 239–methionine 259 traverse the membrane as a helical segment. Residues glycine 260–glutamate 388 are Extracellular-facing. 2 disulfides stabilise this stretch: cysteine 273–cysteine 383 and cysteine 301–cysteine 368. Residues asparagine 282 and asparagine 353 are each glycosylated (N-linked (GlcNAc...) asparagine). The chain crosses the membrane as a helical span at residues glycine 389–cysteine 409. The Cytoplasmic segment spans residues serine 410–isoleucine 449.

Belongs to the tweety family. As to quaternary structure, homotetramer; disulfide-linked. Homodimer.

It localises to the cell membrane. It carries out the reaction chloride(in) = chloride(out). It catalyses the reaction L-glutamate(out) = L-glutamate(in). In terms of biological role, may act as a calcium-independent, swelling-dependent volume-regulated anion channel (VRAC-swell) which plays a pivotal role in the process of regulatory volume decrease (RVD) in the brain through the efflux of anions like chloride and organic osmolytes like glutamate. The sequence is that of Protein tweety homolog 1 (ttyh1) from Xenopus tropicalis (Western clawed frog).